The primary structure comprises 714 residues: DNA ligase (714 aa).

Residues 40–44 (DADYD), 90–91 (SL), and Glu124 each bind NAD(+). Lys126 serves as the catalytic N6-AMP-lysine intermediate. NAD(+)-binding residues include Arg147, Glu183, Lys304, and Lys328. Positions 420, 423, 438, and 444 each coordinate Zn(2+). Positions 634–714 (TRDSEVSGKT…EWAAIVAAAG (81 aa)) constitute a BRCT domain.

The protein belongs to the NAD-dependent DNA ligase family. LigA subfamily. Requires Mg(2+) as cofactor. Mn(2+) is required as a cofactor.

The enzyme catalyses NAD(+) + (deoxyribonucleotide)n-3'-hydroxyl + 5'-phospho-(deoxyribonucleotide)m = (deoxyribonucleotide)n+m + AMP + beta-nicotinamide D-nucleotide.. DNA ligase that catalyzes the formation of phosphodiester linkages between 5'-phosphoryl and 3'-hydroxyl groups in double-stranded DNA using NAD as a coenzyme and as the energy source for the reaction. It is essential for DNA replication and repair of damaged DNA. This Sphingopyxis alaskensis (strain DSM 13593 / LMG 18877 / RB2256) (Sphingomonas alaskensis) protein is DNA ligase.